The following is a 262-amino-acid chain: Hemin import ATP-binding protein HmuV (262 aa).

Positions 3-244 (LQARNLTLAR…DHMRRVYGIE (242 aa)) constitute an ABC transporter domain. 35-42 (GANGAGKS) is a binding site for ATP.

The protein belongs to the ABC transporter superfamily. Heme (hemin) importer (TC 3.A.1.14.5) family. In terms of assembly, the complex is composed of two ATP-binding proteins (HmuV), two transmembrane proteins (HmuU) and a solute-binding protein (HmuT).

It is found in the cell inner membrane. Functionally, part of the ABC transporter complex HmuTUV involved in hemin import. Responsible for energy coupling to the transport system. The polypeptide is Hemin import ATP-binding protein HmuV (Bordetella pertussis (strain Tohama I / ATCC BAA-589 / NCTC 13251)).